The following is an 81-amino-acid chain: Small ribosomal subunit protein uS15 (81 aa).

This sequence belongs to the universal ribosomal protein uS15 family. In terms of assembly, part of the 30S ribosomal subunit. Forms a bridge to the 50S subunit in the 70S ribosome, contacting the 23S rRNA.

Its function is as follows. One of the primary rRNA binding proteins, it binds directly to 16S rRNA where it helps nucleate assembly of the platform of the 30S subunit by binding and bridging several RNA helices of the 16S rRNA. In terms of biological role, forms an intersubunit bridge (bridge B4) with the 23S rRNA of the 50S subunit in the ribosome. The polypeptide is Small ribosomal subunit protein uS15 (Mesomycoplasma hyorhinis (Mycoplasma hyorhinis)).